Reading from the N-terminus, the 439-residue chain is Beta-conglycinin beta subunit 1 (439 aa).

A signal peptide spans 1–23; the sequence is MMRVRFPLLVLLGTVFLASVCVS. 2 consecutive Cupin type-1 domains span residues 34–193 and 240–401; these read FYLR…EEIN and FNLR…QDVE. Asparagine 351 is a glycosylation site (N-linked (GlcNAc...) asparagine). The disordered stretch occupies residues 411–439; sequence YFVDAQPQQKEEGSKGRKGPFPSILGALY. The necessary for sorting to protein storage vacuole stretch occupies residues 430 to 439; sequence PFPSILGALY.

It belongs to the 7S seed storage protein family. In terms of assembly, the alpha-, alpha'-, and beta-subunits associate in various combinations to form trimeric proteins. In terms of processing, the N-linked glycans are not essential for the folding and assembly into trimers. In terms of tissue distribution, expressed in seeds. Not detected in cotyledons or in mature plants.

It is found in the vacuole. The protein resides in the aleurone grain. The protein localises to the endoplasmic reticulum. It localises to the protein storage vacuole. Seed storage protein. Accumulates during seed development and is hydrolyzed after germination to provide a carbon and nitrogen source for the developing seedling. This is Beta-conglycinin beta subunit 1 from Glycine max (Soybean).